The sequence spans 423 residues: Glycine-rich protein 1 (423 aa).

Positions 1–20 (MKKICLTFVFLLSLFPIYSS) are cleaved as a signal peptide. 4 disordered regions span residues 28-47 (TIES…AGPA), 78-133 (DDDN…SKKN), 159-219 (KGGS…GAGA), and 236-288 (GASA…ASAG). Low complexity predominate over residues 31 to 42 (SGSSKSSGSSVG). Composition is skewed to basic and acidic residues over residues 81-93 (NKDK…DGKT) and 102-111 (QNGDDVKSDN). Positions 159-172 (KGGSANNGGEGGAT) are enriched in gly residues. Residues 173–183 (SAGSAGATSGA) are compositionally biased toward low complexity. Gly residues-rich tracts occupy residues 205 to 219 (GAGG…GAGA) and 236 to 247 (GASAGAGAGGAQ). Residues 248-284 (GDAEAASAGSTAGSTSSGGAAASGASSGAGSSDSGQG) are compositionally biased toward low complexity.

As to expression, nacreous layer of shell (at protein level).

It is found in the secreted. This is Glycine-rich protein 1 from Pinctada maxima (Silver-lipped pearl oyster).